The following is a 517-amino-acid chain: tRNA-2-methylthio-N(6)-dimethylallyladenosine synthase (517 aa).

Residues 18-137 (RTYQVRTYGC…LPTLLDRARH (120 aa)) form the MTTase N-terminal domain. Cys27, Cys66, Cys100, Cys174, Cys178, and Cys181 together coordinate [4Fe-4S] cluster. Residues 160-397 (RESDYAAWVS…ELQEQICMEE (238 aa)) enclose the Radical SAM core domain. A TRAM domain is found at 399–470 (RVLIGRIVEL…PHHLIADAGI (72 aa)).

The protein belongs to the methylthiotransferase family. MiaB subfamily. In terms of assembly, monomer. It depends on [4Fe-4S] cluster as a cofactor.

The protein resides in the cytoplasm. It catalyses the reaction N(6)-dimethylallyladenosine(37) in tRNA + (sulfur carrier)-SH + AH2 + 2 S-adenosyl-L-methionine = 2-methylsulfanyl-N(6)-dimethylallyladenosine(37) in tRNA + (sulfur carrier)-H + 5'-deoxyadenosine + L-methionine + A + S-adenosyl-L-homocysteine + 2 H(+). Its function is as follows. Catalyzes the methylthiolation of N6-(dimethylallyl)adenosine (i(6)A), leading to the formation of 2-methylthio-N6-(dimethylallyl)adenosine (ms(2)i(6)A) at position 37 in tRNAs that read codons beginning with uridine. This chain is tRNA-2-methylthio-N(6)-dimethylallyladenosine synthase, found in Mycobacterium leprae (strain TN).